The primary structure comprises 354 residues: Isopentenyl-diphosphate delta-isomerase (354 aa).

Substrate is bound at residue 11 to 12; the sequence is KK. FMN-binding positions include Ser-67, 68-70, Ser-98, and Asn-126; that span reads SMT. Residue 98-100 participates in substrate binding; the sequence is SFK. Gln-160 serves as a coordination point for substrate. Glu-161 is a binding site for Mg(2+). FMN is bound by residues Lys-192, Thr-222, and 289-290; that span reads AA.

This sequence belongs to the IPP isomerase type 2 family. In terms of assembly, homooctamer. Dimer of tetramers. The cofactor is FMN. It depends on NADPH as a cofactor. Mg(2+) serves as cofactor.

It localises to the cytoplasm. It carries out the reaction isopentenyl diphosphate = dimethylallyl diphosphate. Involved in the biosynthesis of isoprenoids. Catalyzes the 1,3-allylic rearrangement of the homoallylic substrate isopentenyl (IPP) to its allylic isomer, dimethylallyl diphosphate (DMAPP). The sequence is that of Isopentenyl-diphosphate delta-isomerase from Borreliella afzelii (strain PKo) (Borrelia afzelii).